A 255-amino-acid polypeptide reads, in one-letter code: Proteasome subunit alpha (255 aa).

The interval 224–255 (RLEELLGERGPAQHAPEEPADPEPEPPIAPPG) is disordered.

It belongs to the peptidase T1A family. The 20S proteasome core is composed of 14 alpha and 14 beta subunits that assemble into four stacked heptameric rings, resulting in a barrel-shaped structure. The two inner rings, each composed of seven catalytic beta subunits, are sandwiched by two outer rings, each composed of seven alpha subunits. The catalytic chamber with the active sites is on the inside of the barrel. Has a gated structure, the ends of the cylinder being occluded by the N-termini of the alpha-subunits. Is capped by the proteasome-associated ATPase, ARC.

It localises to the cytoplasm. The protein operates within protein degradation; proteasomal Pup-dependent pathway. With respect to regulation, the formation of the proteasomal ATPase ARC-20S proteasome complex, likely via the docking of the C-termini of ARC into the intersubunit pockets in the alpha-rings, may trigger opening of the gate for substrate entry. Interconversion between the open-gate and close-gate conformations leads to a dynamic regulation of the 20S proteasome proteolysis activity. Its function is as follows. Component of the proteasome core, a large protease complex with broad specificity involved in protein degradation. The chain is Proteasome subunit alpha from Nocardioides sp. (strain ATCC BAA-499 / JS614).